The primary structure comprises 105 residues: Chloroacetanilide N-alkylformylase 1, ferredoxin component (105 aa).

In terms of domain architecture, 2Fe-2S ferredoxin-type spans 2–105 (PTIIVTTRDG…GLRVAIAPED (104 aa)). Residues Cys-40, Cys-46, Cys-49, and Cys-86 each contribute to the [2Fe-2S] cluster site.

It belongs to the adrenodoxin/putidaredoxin family. In terms of assembly, the chloroacetanilide N-alkylformylase multicomponent enzyme system is composed of an oxygenase component (CndA) and an electron transfer component formed by a ferredoxin reductase (CndC1) and a ferredoxin (CndB1). In vitro, chloroacetanilide N-alkylformylase assays in which CndB1 is substituted for CndB2 demonstrate that the two enzymes possess nearly identical activities. It depends on [2Fe-2S] cluster as a cofactor.

In terms of biological role, component of the chloroacetanilide N-alkylformylase multicomponent enzyme system involved in the degradation of chloroacetanilide herbicides (N-alkoxyalkyl-N-chloroacetyl-substituted aniline derivatives). In vitro, functions as an intermediate electron transfer protein. This Rhizorhabdus wittichii (strain DC-6 / KACC 16600) (Sphingomonas wittichii) protein is Chloroacetanilide N-alkylformylase 1, ferredoxin component.